The chain runs to 165 residues: Peptide methionine sulfoxide reductase MsrA (165 aa).

Cys10 is a catalytic residue.

The protein belongs to the MsrA Met sulfoxide reductase family.

It carries out the reaction L-methionyl-[protein] + [thioredoxin]-disulfide + H2O = L-methionyl-(S)-S-oxide-[protein] + [thioredoxin]-dithiol. The enzyme catalyses [thioredoxin]-disulfide + L-methionine + H2O = L-methionine (S)-S-oxide + [thioredoxin]-dithiol. In terms of biological role, has an important function as a repair enzyme for proteins that have been inactivated by oxidation. Catalyzes the reversible oxidation-reduction of methionine sulfoxide in proteins to methionine. This Campylobacter jejuni subsp. jejuni serotype O:6 (strain 81116 / NCTC 11828) protein is Peptide methionine sulfoxide reductase MsrA.